The chain runs to 1068 residues: Carbamoyl phosphate synthase large chain (1068 aa).

The carboxyphosphate synthetic domain stretch occupies residues 1-401; sequence MPLNKDIKKV…AFLKGTRSLE (401 aa). Positions 129, 169, 175, 176, 208, 210, 215, 241, 242, 243, 284, and 298 each coordinate ATP. Positions 133-327 constitute an ATP-grasp 1 domain; it reads RNVMSRINGP…IAKVASKIAL (195 aa). Residues glutamine 284, glutamate 298, and asparagine 300 each contribute to the Mg(2+) site. Mn(2+) is bound by residues glutamine 284, glutamate 298, and asparagine 300. Residues 402–549 form an oligomerization domain region; that stretch reads IGKYSLEHKK…YSTYDVYDEV (148 aa). The carbamoyl phosphate synthetic domain stretch occupies residues 550-932; the sequence is EVSKNKKVIV…ALYKGFIGAN (383 aa). The region spanning 674 to 864 is the ATP-grasp 2 domain; that stretch reads DELLEKLKIA…IVDIATRVML (191 aa). Residues arginine 710, lysine 749, leucine 751, glutamate 755, glycine 780, valine 781, histidine 782, serine 783, glutamine 823, and glutamate 835 each coordinate ATP. Glutamine 823, glutamate 835, and asparagine 837 together coordinate Mg(2+). Residues glutamine 823, glutamate 835, and asparagine 837 each contribute to the Mn(2+) site. One can recognise an MGS-like domain in the interval 933 to 1068; the sequence is MSIKKEKGTV…ETLYIFDLSN (136 aa). The interval 933-1068 is allosteric domain; that stretch reads MSIKKEKGTV…ETLYIFDLSN (136 aa).

Belongs to the CarB family. Composed of two chains; the small (or glutamine) chain promotes the hydrolysis of glutamine to ammonia, which is used by the large (or ammonia) chain to synthesize carbamoyl phosphate. Tetramer of heterodimers (alpha,beta)4. Mg(2+) serves as cofactor. It depends on Mn(2+) as a cofactor.

It carries out the reaction hydrogencarbonate + L-glutamine + 2 ATP + H2O = carbamoyl phosphate + L-glutamate + 2 ADP + phosphate + 2 H(+). The catalysed reaction is hydrogencarbonate + NH4(+) + 2 ATP = carbamoyl phosphate + 2 ADP + phosphate + 2 H(+). It functions in the pathway amino-acid biosynthesis; L-arginine biosynthesis; carbamoyl phosphate from bicarbonate: step 1/1. The protein operates within pyrimidine metabolism; UMP biosynthesis via de novo pathway; (S)-dihydroorotate from bicarbonate: step 1/3. Large subunit of the glutamine-dependent carbamoyl phosphate synthetase (CPSase). CPSase catalyzes the formation of carbamoyl phosphate from the ammonia moiety of glutamine, carbonate, and phosphate donated by ATP, constituting the first step of 2 biosynthetic pathways, one leading to arginine and/or urea and the other to pyrimidine nucleotides. The large subunit (synthetase) binds the substrates ammonia (free or transferred from glutamine from the small subunit), hydrogencarbonate and ATP and carries out an ATP-coupled ligase reaction, activating hydrogencarbonate by forming carboxy phosphate which reacts with ammonia to form carbamoyl phosphate. The polypeptide is Carbamoyl phosphate synthase large chain (Clostridium botulinum (strain Kyoto / Type A2)).